The sequence spans 305 residues: GMP synthase [glutamine-hydrolyzing] subunit B (305 aa).

One can recognise a GMPS ATP-PPase domain in the interval 2–184; the sequence is VKPEKFIPKA…LQLPEEICER (183 aa). 29 to 35 lines the ATP pocket; it reads SGGVDSS.

In terms of assembly, heterodimer composed of a glutamine amidotransferase subunit (A) and a GMP-binding subunit (B).

It carries out the reaction XMP + L-glutamine + ATP + H2O = GMP + L-glutamate + AMP + diphosphate + 2 H(+). The protein operates within purine metabolism; GMP biosynthesis; GMP from XMP (L-Gln route): step 1/1. Functionally, catalyzes the synthesis of GMP from XMP. This Methanosarcina acetivorans (strain ATCC 35395 / DSM 2834 / JCM 12185 / C2A) protein is GMP synthase [glutamine-hydrolyzing] subunit B (guaAB).